The sequence spans 139 residues: uncharacterized protein (139 aa).

Residues Met-1 to Lys-133 form the Globin domain.

The protein belongs to the globin family.

This is an uncharacterized protein from Aquifex aeolicus (strain VF5).